Consider the following 336-residue polypeptide: Mitochondrial fission regulator 2 (336 aa).

Residues 139–166 (QPDALLKISALEEELQRLRAQIATIITA) adopt a coiled-coil conformation. The tract at residues 296-336 (HRQRDDSFGKENHSAEPSPFSSPDTPRIFQHTRRSQGRIHL) is disordered. Over residues 297-309 (RQRDDSFGKENHS) the composition is skewed to basic and acidic residues. Basic residues predominate over residues 325 to 336 (QHTRRSQGRIHL).

Belongs to the MTFR1 family.

It localises to the mitochondrion. In terms of biological role, may play a role in mitochondrial aerobic respiration. Can also promote mitochondrial fission. This is Mitochondrial fission regulator 2 (mtfr2) from Danio rerio (Zebrafish).